The following is a 329-amino-acid chain: Flotillin-like protein FloA (329 aa).

Helical transmembrane passes span 4-24 (IGFI…FSFV) and 26-46 (VGLW…TLVG).

This sequence belongs to the flotillin-like FloA family. In terms of assembly, homooligomerizes.

The protein localises to the cell membrane. Its subcellular location is the membrane raft. Functionally, found in functional membrane microdomains (FMM) that may be equivalent to eukaryotic membrane rafts. FMMs are highly dynamic and increase in number as cells age. Flotillins are thought to be important factors in membrane fluidity. This chain is Flotillin-like protein FloA, found in Staphylococcus epidermidis (strain ATCC 35984 / DSM 28319 / BCRC 17069 / CCUG 31568 / BM 3577 / RP62A).